The primary structure comprises 693 residues: Polyribonucleotide nucleotidyltransferase (693 aa).

2 residues coordinate Mg(2+): Asp-487 and Asp-493. The region spanning 554 to 613 (PRIYTIKINPEKIKDVIGKGGSIIRMLTEETGTVIEIKDDGIVKISAINGEKAKYAIKRI) is the KH domain. The 69-residue stretch at 623-691 (GKIYSGKVTR…RQGRIRLSMK (69 aa)) folds into the S1 motif domain.

It belongs to the polyribonucleotide nucleotidyltransferase family. As to quaternary structure, component of the RNA degradosome, which is a multiprotein complex involved in RNA processing and mRNA degradation. Requires Mg(2+) as cofactor.

Its subcellular location is the cytoplasm. It catalyses the reaction RNA(n+1) + phosphate = RNA(n) + a ribonucleoside 5'-diphosphate. In terms of biological role, involved in mRNA degradation. Catalyzes the phosphorolysis of single-stranded polyribonucleotides processively in the 3'- to 5'-direction. This chain is Polyribonucleotide nucleotidyltransferase, found in Buchnera aphidicola subsp. Cinara cedri (strain Cc).